The following is a 264-amino-acid chain: Undecaprenyl-diphosphatase (264 aa).

7 consecutive transmembrane segments (helical) span residues 38 to 58, 75 to 95, 106 to 126, 136 to 156, 181 to 201, 217 to 237, and 242 to 262; these read RSDF…VLVF, REYV…GLVV, VSPV…VEAY, VTWT…VFPG, FVFL…FLEM, VAFL…MGYI, and FTAF…WLPS.

The protein belongs to the UppP family.

It is found in the cell inner membrane. The catalysed reaction is di-trans,octa-cis-undecaprenyl diphosphate + H2O = di-trans,octa-cis-undecaprenyl phosphate + phosphate + H(+). Its function is as follows. Catalyzes the dephosphorylation of undecaprenyl diphosphate (UPP). Confers resistance to bacitracin. This Stenotrophomonas maltophilia (strain R551-3) protein is Undecaprenyl-diphosphatase.